We begin with the raw amino-acid sequence, 715 residues long: Scinderin (715 aa).

The segment at 1 to 363 (MAQGLYHEEF…DGFGKVYVTE (363 aa)) is actin-severing. One copy of the Gelsolin-like 1 repeat lies at 27–77 (LELVPVPESAYGNFYVGDAYLVLHTTQASRGFTYRLHFWLGKECTQDESTA). Y102 is modified (phosphotyrosine). A 1,2-diacyl-sn-glycero-3-phospho-(1D-myo-inositol-4,5-bisphosphate) is bound by residues 112–119 (KGGLKYKA) and 138–146 (RLLHVKGRR). Gelsolin-like repeat units lie at residues 148 to 188 (VRAT…YERL), 265 to 307 (LVAE…QERK), 398 to 451 (VQIW…DELT), and 523 to 564 (TRIM…EEEK). The actin-binding, Ca-sensitive stretch occupies residues 364 to 715 (KVAHVKQIPF…WFLGWDSSRW (352 aa)). The interval 364–715 (KVAHVKQIPF…WFLGWDSSRW (352 aa)) is ca(2+)-dependent actin binding. Ca(2+) is bound by residues N538, D539, and E562. Position 599 is a phosphotyrosine (Y599). Residues 626-668 (FIIEEVPGEFTQDDLAEDDVMLLDAWEQIFIWIGKDANEVEKS) form a Gelsolin-like 6 repeat. 3 residues coordinate Ca(2+): D643, D644, and E666.

Belongs to the villin/gelsolin family. Post-translationally, the N-terminus is blocked. In the adrenal gland, expressed in the medulla but, in the cortex, found only in diffuse parts.

It localises to the cytoplasm. Its subcellular location is the cytoskeleton. The protein localises to the cell projection. The protein resides in the podosome. Its function is as follows. Ca(2+)-dependent actin filament-severing protein that has a regulatory function in exocytosis by affecting the organization of the microfilament network underneath the plasma membrane. In vitro, also has barbed end capping and nucleating activities in the presence of Ca(2+). Severing activity is inhibited by phosphatidylinositol 4,5-bis-phosphate (PIP2). Required for megakaryocyte differentiation, maturation, polyploidization and apoptosis with the release of platelet-like particles. Plays a role in osteoclastogenesis (OCG) and actin cytoskeletal organization in osteoclasts. Regulates chondrocyte proliferation and differentiation. Inhibits cell proliferation and tumorigenesis. Signaling is mediated by MAPK, p38 and JNK pathways. The polypeptide is Scinderin (Bos taurus (Bovine)).